A 342-amino-acid chain; its full sequence is GTPase Obg (342 aa).

Residues 1 to 159 form the Obg domain; the sequence is MQFIDQAQIE…KLLRLELKLL (159 aa). An OBG-type G domain is found at 160–330; sequence AEVGIIGLPN…MLQEVWGILD (171 aa). GTP is bound by residues 166–173, 191–195, 213–216, 280–283, and 311–313; these read GLPNAGKS, FTTLI, DIPG, NKID, and SAV. Residues Ser173 and Thr193 each coordinate Mg(2+).

The protein belongs to the TRAFAC class OBG-HflX-like GTPase superfamily. OBG GTPase family. In terms of assembly, monomer. Mg(2+) serves as cofactor.

The protein localises to the cytoplasm. An essential GTPase which binds GTP, GDP and possibly (p)ppGpp with moderate affinity, with high nucleotide exchange rates and a fairly low GTP hydrolysis rate. Plays a role in control of the cell cycle, stress response, ribosome biogenesis and in those bacteria that undergo differentiation, in morphogenesis control. The sequence is that of GTPase Obg from Trichormus variabilis (strain ATCC 29413 / PCC 7937) (Anabaena variabilis).